The sequence spans 225 residues: Large ribosomal subunit protein bL25 (225 aa).

The segment at 188-225 (EEIEEAEAEAQATDADTATDDSEQTSEEQAEENKEDKE) is disordered. Residues 204–217 (TATDDSEQTSEEQA) show a composition bias toward acidic residues.

Belongs to the bacterial ribosomal protein bL25 family. CTC subfamily. As to quaternary structure, part of the 50S ribosomal subunit; part of the 5S rRNA/L5/L18/L25 subcomplex. Contacts the 5S rRNA. Binds to the 5S rRNA independently of L5 and L18.

In terms of biological role, this is one of the proteins that binds to the 5S RNA in the ribosome where it forms part of the central protuberance. The polypeptide is Large ribosomal subunit protein bL25 (Exiguobacterium sibiricum (strain DSM 17290 / CCUG 55495 / CIP 109462 / JCM 13490 / 255-15)).